We begin with the raw amino-acid sequence, 247 residues long: Adenosylcobinamide-GDP ribazoletransferase (247 aa).

6 helical membrane passes run 34-54 (IVMF…IFIL), 59-79 (CGIP…TGGF), 113-133 (GGLA…ELAL), 138-158 (MLAA…LLMY), 171-193 (VFIG…IIAT), and 197-219 (PGMQ…GQLL).

Belongs to the CobS family. The cofactor is Mg(2+).

The protein resides in the cell inner membrane. The enzyme catalyses alpha-ribazole + adenosylcob(III)inamide-GDP = adenosylcob(III)alamin + GMP + H(+). The catalysed reaction is alpha-ribazole 5'-phosphate + adenosylcob(III)inamide-GDP = adenosylcob(III)alamin 5'-phosphate + GMP + H(+). It participates in cofactor biosynthesis; adenosylcobalamin biosynthesis; adenosylcobalamin from cob(II)yrinate a,c-diamide: step 7/7. In terms of biological role, joins adenosylcobinamide-GDP and alpha-ribazole to generate adenosylcobalamin (Ado-cobalamin). Also synthesizes adenosylcobalamin 5'-phosphate from adenosylcobinamide-GDP and alpha-ribazole 5'-phosphate. The polypeptide is Adenosylcobinamide-GDP ribazoletransferase (Salmonella newport (strain SL254)).